Consider the following 297-residue polypeptide: GTPase Era (297 aa).

An Era-type G domain is found at 7–174; it reads RSGFVSIVGR…VQLVHGLLPE (168 aa). Residues 15 to 22 are G1; that stretch reads GRPNVGKS. A GTP-binding site is contributed by 15–22; the sequence is GRPNVGKS. Positions 41 to 45 are G2; that stretch reads QTTRN. The interval 62–65 is G3; it reads DTPG. Residues 62 to 66 and 124 to 127 each bind GTP; these read DTPGI and NKID. Residues 124–127 form a G4 region; sequence NKID. Positions 153–155 are G5; that stretch reads VSA. Residues 205 to 282 form the KH type-2 domain; the sequence is THDEVPYSTA…FLELFVRVSG (78 aa).

The protein belongs to the TRAFAC class TrmE-Era-EngA-EngB-Septin-like GTPase superfamily. Era GTPase family. In terms of assembly, monomer.

Its subcellular location is the cytoplasm. It is found in the cell inner membrane. Functionally, an essential GTPase that binds both GDP and GTP, with rapid nucleotide exchange. Plays a role in 16S rRNA processing and 30S ribosomal subunit biogenesis and possibly also in cell cycle regulation and energy metabolism. The protein is GTPase Era of Geobacter sp. (strain M21).